The chain runs to 425 residues: Serine--tRNA ligase (425 aa).

231–233 is a binding site for L-serine; the sequence is TAE. 262-264 lines the ATP pocket; that stretch reads RSE. Glu285 serves as a coordination point for L-serine. 349–352 lines the ATP pocket; it reads EISS. Ser385 lines the L-serine pocket.

This sequence belongs to the class-II aminoacyl-tRNA synthetase family. Type-1 seryl-tRNA synthetase subfamily. In terms of assembly, homodimer. The tRNA molecule binds across the dimer.

It is found in the cytoplasm. The enzyme catalyses tRNA(Ser) + L-serine + ATP = L-seryl-tRNA(Ser) + AMP + diphosphate + H(+). It catalyses the reaction tRNA(Sec) + L-serine + ATP = L-seryl-tRNA(Sec) + AMP + diphosphate + H(+). The protein operates within aminoacyl-tRNA biosynthesis; selenocysteinyl-tRNA(Sec) biosynthesis; L-seryl-tRNA(Sec) from L-serine and tRNA(Sec): step 1/1. Functionally, catalyzes the attachment of serine to tRNA(Ser). Is also able to aminoacylate tRNA(Sec) with serine, to form the misacylated tRNA L-seryl-tRNA(Sec), which will be further converted into selenocysteinyl-tRNA(Sec). This Bacillus licheniformis (strain ATCC 14580 / DSM 13 / JCM 2505 / CCUG 7422 / NBRC 12200 / NCIMB 9375 / NCTC 10341 / NRRL NRS-1264 / Gibson 46) protein is Serine--tRNA ligase.